The sequence spans 209 residues: tRNA (guanine-N(7)-)-methyltransferase (209 aa).

S-adenosyl-L-methionine contacts are provided by aspartate 35, glutamate 60, asparagine 87, and aspartate 113. Aspartate 113 is a catalytic residue. 2 residues coordinate substrate: lysine 117 and aspartate 149.

It belongs to the class I-like SAM-binding methyltransferase superfamily. TrmB family.

It carries out the reaction guanosine(46) in tRNA + S-adenosyl-L-methionine = N(7)-methylguanosine(46) in tRNA + S-adenosyl-L-homocysteine. It participates in tRNA modification; N(7)-methylguanine-tRNA biosynthesis. In terms of biological role, catalyzes the formation of N(7)-methylguanine at position 46 (m7G46) in tRNA. The protein is tRNA (guanine-N(7)-)-methyltransferase of Prochlorococcus marinus (strain MIT 9215).